Consider the following 121-residue polypeptide: MARIAGINIPPHQHAEIGLTAIFGIGRTRARKICEACGIAYSKKIKDLTDGDLEKIRDQIAQFTIEGDLRRETTMNIKRLMDIGCYRGFRHRRGLPMRGQRTRTNARTRKGPRKGAAALKK.

A disordered region spans residues 93–121; sequence RGLPMRGQRTRTNARTRKGPRKGAAALKK.

It belongs to the universal ribosomal protein uS13 family. In terms of assembly, part of the 30S ribosomal subunit. Forms a loose heterodimer with protein S19. Forms two bridges to the 50S subunit in the 70S ribosome.

Located at the top of the head of the 30S subunit, it contacts several helices of the 16S rRNA. In the 70S ribosome it contacts the 23S rRNA (bridge B1a) and protein L5 of the 50S subunit (bridge B1b), connecting the 2 subunits; these bridges are implicated in subunit movement. Contacts the tRNAs in the A and P-sites. The sequence is that of Small ribosomal subunit protein uS13 from Paracidovorax citrulli (strain AAC00-1) (Acidovorax citrulli).